The following is a 587-amino-acid chain: MANSGLILLVMFMIHVTTVHNVPLPSTAPSIITQLSDITTSIIEEDAFGLTTPTTGLLTPVSENDSDDDGDDITTIQTTTSSSQTVISGVVVEEGVHESNVEILKAHLEKFGYTPPGSTFGEANLNYTSAILDFQEHGGINQTGILDADTAELLSTPRCGVPDVLPFVTSSITWSRNQPVTYSFGALTSDLNQNDVKDEIRRAFRVWDDVSGLSFREVPDTTSVDIRIKFGSYDHGDGISFDGRGGVLAHAFLPRNGDAHFDDSETWTEGTRSGTNLFQVAAHEFGHSLGLYHSTVRSALMYPYYQGYVPNFRLDNDDIAGIRSLYGSNSGSGTTTTTRRPTTTRATTTRRTTTTRATTTRATTTTTTSPSRPSPPRRACSGSFDAVVRDSSNRIYALTGPYFWQLDQPSPSWGLVSNRFGFGLPQNIDASFQRGVVTYFFSECYYYYQTSTQRNFPRIPVNRKWVGLPCNIDAVYRSSRGPTYFFKDSFVYKFNSNNRLQRRTRISSLFNDVPSALHDGVEAVVRADRNYIHFYRDGRYYRMTDYGRQFVNFPNGLPYSDVIESVIPQCRGRSLSYESEGCSNSSE.

The first 18 residues, Met-1–Thr-18, serve as a signal peptide directing secretion. Residues Val-19 to Pro-166 constitute a propeptide, activation peptide. Residues Asn-64, Asn-126, and Asn-141 are each glycosylated (N-linked (GlcNAc...) asparagine). The Cysteine switch signature appears at Pro-157–Val-164. Residues Cys-159 and His-283 each contribute to the Zn(2+) site. Glu-284 is a catalytic residue. Residues His-287 and His-293 each contribute to the Zn(2+) site. Positions Leu-325 to Gly-382 are disordered. A compositionally biased stretch (low complexity) spans Thr-334–Ser-371. A disulfide bridge connects residues Cys-380 and Cys-582. Hemopexin repeat units lie at residues Ser-381–Phe-422, Pro-425–Leu-468, Pro-469–Val-513, and His-518–Cys-570. A glycan (N-linked (GlcNAc...) asparagine) is linked at Asn-584.

This sequence belongs to the peptidase M10A family. Zn(2+) serves as cofactor.

The enzyme catalyses Hydrolysis of proteins of the fertilization envelope and dimethylcasein.. In terms of biological role, allows the sea urchin to digest the protective envelope derived from the egg extracellular matrix; thus allowing the sea urchin to swim freely. This chain is Hatching enzyme, found in Paracentrotus lividus (Common sea urchin).